The following is a 198-amino-acid chain: Nucleoid occlusion factor SlmA (198 aa).

The 62-residue stretch at 9–70 folds into the HTH tetR-type domain; sequence RNRREEILQS…SLIEFIEDSL (62 aa). Residues 33-52 constitute a DNA-binding region (H-T-H motif); sequence TTAKLAASVGVSEAALYRHF. Residues 117–145 adopt a coiled-coil conformation; the sequence is EQDRLQGRINQLFERIEAQLRQVLREKKM.

Belongs to the nucleoid occlusion factor SlmA family. Homodimer. Interacts with FtsZ.

The protein resides in the cytoplasm. It is found in the nucleoid. Functionally, required for nucleoid occlusion (NO) phenomenon, which prevents Z-ring formation and cell division over the nucleoid. Acts as a DNA-associated cell division inhibitor that binds simultaneously chromosomal DNA and FtsZ, and disrupts the assembly of FtsZ polymers. SlmA-DNA-binding sequences (SBS) are dispersed on non-Ter regions of the chromosome, preventing FtsZ polymerization at these regions. In Cronobacter sakazakii (strain ATCC BAA-894) (Enterobacter sakazakii), this protein is Nucleoid occlusion factor SlmA.